We begin with the raw amino-acid sequence, 555 residues long: CTP synthase (555 aa).

The tract at residues 1–270 (MTKFVFVTGG…DGLICDKLRL (270 aa)) is amidoligase domain. Residue Ser-13 participates in CTP binding. Ser-13 is a binding site for UTP. Residues 14–19 (SLGKGI) and Asp-71 each bind ATP. Mg(2+)-binding residues include Asp-71 and Glu-144. CTP is bound by residues 151–153 (DIE), 191–196 (KTKPTQ), and Lys-227. UTP is bound by residues 191 to 196 (KTKPTQ) and Lys-227. Residues 295–547 (NIVMVGKYVE…IKAALDHQAA (253 aa)) form the Glutamine amidotransferase type-1 domain. Residue Gly-356 coordinates L-glutamine. The active-site Nucleophile; for glutamine hydrolysis is the Cys-383. L-glutamine is bound by residues 384-387 (LGMQ), Glu-407, and Arg-473. Active-site residues include His-520 and Glu-522.

It belongs to the CTP synthase family. Homotetramer.

The catalysed reaction is UTP + L-glutamine + ATP + H2O = CTP + L-glutamate + ADP + phosphate + 2 H(+). It catalyses the reaction L-glutamine + H2O = L-glutamate + NH4(+). It carries out the reaction UTP + NH4(+) + ATP = CTP + ADP + phosphate + 2 H(+). It functions in the pathway pyrimidine metabolism; CTP biosynthesis via de novo pathway; CTP from UDP: step 2/2. With respect to regulation, allosterically activated by GTP, when glutamine is the substrate; GTP has no effect on the reaction when ammonia is the substrate. The allosteric effector GTP functions by stabilizing the protein conformation that binds the tetrahedral intermediate(s) formed during glutamine hydrolysis. Inhibited by the product CTP, via allosteric rather than competitive inhibition. Functionally, catalyzes the ATP-dependent amination of UTP to CTP with either L-glutamine or ammonia as the source of nitrogen. Regulates intracellular CTP levels through interactions with the four ribonucleotide triphosphates. The sequence is that of CTP synthase from Albidiferax ferrireducens (strain ATCC BAA-621 / DSM 15236 / T118) (Rhodoferax ferrireducens).